Here is an 88-residue protein sequence, read N- to C-terminus: Sec-independent protein translocase protein TatA (88 aa).

A helical membrane pass occupies residues 1–21 (MGSIGWAQLLIIAVIVVLLFG). The disordered stretch occupies residues 41–88 (KAMGDDSQTPPTNVDKTSNDADFAKSITEKQQPVAKAEESKSHEKEQG). Positions 46–56 (DSQTPPTNVDK) are enriched in polar residues. The segment covering 76–88 (KAEESKSHEKEQG) has biased composition (basic and acidic residues).

This sequence belongs to the TatA/E family. The Tat system comprises two distinct complexes: a TatABC complex, containing multiple copies of TatA, TatB and TatC subunits, and a separate TatA complex, containing only TatA subunits. Substrates initially bind to the TatABC complex, which probably triggers association of the separate TatA complex to form the active translocon.

It localises to the cell inner membrane. In terms of biological role, part of the twin-arginine translocation (Tat) system that transports large folded proteins containing a characteristic twin-arginine motif in their signal peptide across membranes. TatA could form the protein-conducting channel of the Tat system. The protein is Sec-independent protein translocase protein TatA of Yersinia pestis.